The primary structure comprises 341 residues: tRNA N6-adenosine threonylcarbamoyltransferase (341 aa).

Fe cation is bound by residues His-115 and His-119. Substrate is bound by residues 138 to 142, Asp-171, Gly-184, and Asn-276; that span reads LVSGG. Asp-304 is a binding site for Fe cation.

This sequence belongs to the KAE1 / TsaD family. Requires Fe(2+) as cofactor.

The protein resides in the cytoplasm. It carries out the reaction L-threonylcarbamoyladenylate + adenosine(37) in tRNA = N(6)-L-threonylcarbamoyladenosine(37) in tRNA + AMP + H(+). Required for the formation of a threonylcarbamoyl group on adenosine at position 37 (t(6)A37) in tRNAs that read codons beginning with adenine. Is involved in the transfer of the threonylcarbamoyl moiety of threonylcarbamoyl-AMP (TC-AMP) to the N6 group of A37, together with TsaE and TsaB. TsaD likely plays a direct catalytic role in this reaction. The chain is tRNA N6-adenosine threonylcarbamoyltransferase from Stenotrophomonas maltophilia (strain K279a).